The sequence spans 244 residues: Venom nerve growth factor 2 (244 aa).

The signal sequence occupies residues 1 to 18 (MSMLCYTLIIAFLIGTWA). Residues 19 to 125 (APKSEDNVPL…TLNRNIRAKR (107 aa)) constitute a propeptide that is removed on maturation. Residues 47–66 (GLKTSRNTDQRHPAPKKAED) are compositionally biased toward basic and acidic residues. Positions 47–67 (GLKTSRNTDQRHPAPKKAEDQ) are disordered. Disulfide bonds link Cys-139-Cys-205, Cys-181-Cys-233, and Cys-193-Cys-235.

This sequence belongs to the NGF-beta family. In terms of assembly, homodimer; non-covalently linked. Expressed by the venom gland.

Its subcellular location is the secreted. Functionally, nerve growth factor is important for the development and maintenance of the sympathetic and sensory nervous systems. It stimulates division and differentiation of sympathetic and embryonic sensory neurons as well as basal forebrain cholinergic neurons in the brain. Its relevance in the snake venom is not clear. However, it has been shown to inhibit metalloproteinase-dependent proteolysis of platelet glycoprotein Ib alpha, suggesting a metalloproteinase inhibition to prevent metalloprotease autodigestion and/or protection against prey proteases. Binds a lipid between the two protein chains in the homodimer. The lipid-bound form promotes histamine relase from mouse mast cells, contrary to the lipid-free form. The sequence is that of Venom nerve growth factor 2 from Tropidechis carinatus (Australian rough-scaled snake).